The sequence spans 195 residues: Putative deoxynucleoside kinase (195 aa).

The sequence is that of Putative deoxynucleoside kinase from Frog virus 3 (isolate Goorha) (FV-3).